A 43-amino-acid polypeptide reads, in one-letter code: Protein PsbN (43 aa).

The helical transmembrane segment at 7–27 (LVVAIAAITICITAFAIYTAF) threads the bilayer.

The protein belongs to the PsbN family.

Its subcellular location is the cellular thylakoid membrane. May play a role in photosystem I and II biogenesis. The chain is Protein PsbN from Synechococcus sp. (strain JA-3-3Ab) (Cyanobacteria bacterium Yellowstone A-Prime).